Reading from the N-terminus, the 152-residue chain is Deoxyuridine 5'-triphosphate nucleotidohydrolase (152 aa).

Residues 71 to 73 (RSG), Asn-84, 88 to 90 (LID), and Met-98 contribute to the substrate site.

Belongs to the dUTPase family. It depends on Mg(2+) as a cofactor.

It catalyses the reaction dUTP + H2O = dUMP + diphosphate + H(+). The protein operates within pyrimidine metabolism; dUMP biosynthesis; dUMP from dCTP (dUTP route): step 2/2. Its function is as follows. This enzyme is involved in nucleotide metabolism: it produces dUMP, the immediate precursor of thymidine nucleotides and it decreases the intracellular concentration of dUTP so that uracil cannot be incorporated into DNA. The polypeptide is Deoxyuridine 5'-triphosphate nucleotidohydrolase (Shigella flexneri).